We begin with the raw amino-acid sequence, 283 residues long: uncharacterized protein (283 aa).

An N-terminal signal peptide occupies residues 1-23 (MFAFASFAISAIFFLCSFSYVSS).

The protein localises to the secreted. This is an uncharacterized protein from Schizosaccharomyces pombe (strain 972 / ATCC 24843) (Fission yeast).